The primary structure comprises 777 residues: B3 domain-containing protein REM-like 1 (777 aa).

A DNA-binding region (TF-B3 1) is located at residues 97–193 (FVTFTLAPVD…TPVLSLCFEE (97 aa)). Disordered regions lie at residues 200–248 (VGEE…TSPS) and 344–391 (KSSS…ESSS). The segment covering 218 to 243 (KIVKDDNNKDESSTWKREGNHLRCKD) has biased composition (basic and acidic residues). A DNA-binding region (TF-B3 2) is located at residues 252 to 347 (TLTVTITPDS…TPVLSIKSSS (96 aa)). Over residues 344-368 (KSSSGKGQSEFSKESLSIKPSSGNM) the composition is skewed to polar residues. Over residues 370–388 (KKVENNREASRKYPPRSRE) the composition is skewed to basic and acidic residues. 2 DNA-binding regions (TF-B3) span residues 582–676 (FLTL…RDSS) and 683–777 (FLTL…FYTK).

The protein localises to the nucleus. In Arabidopsis thaliana (Mouse-ear cress), this protein is B3 domain-containing protein REM-like 1.